We begin with the raw amino-acid sequence, 406 residues long: 4-O-methyl-glucuronoyl methylesterase (406 aa).

The N-terminal stretch at 1-17 is a signal peptide; it reads MAFRWLSFLLLALPVLA. C31 and C64 form a disulfide bridge. N-linked (GlcNAc...) asparagine glycans are attached at residues N100, N110, N122, and N178. Positions 215 to 220 match the GXSYXG catalytic site motif motif; the sequence is GCSRDG. 2 disulfides stabilise this stretch: C216–C352 and C248–C324. The Nucleophile role is filled by S217. Substrate-binding residues include K221, Q263, and E271. N285 carries an N-linked (GlcNAc...) asparagine glycan. A substrate-binding site is contributed by W315. N348 carries an N-linked (GlcNAc...) asparagine glycan. The Proton donor/acceptor role is filled by H351. N-linked (GlcNAc...) asparagine glycosylation is found at N376, N387, and N398.

Belongs to the carbohydrate esterase 15 (CE15) family.

It localises to the secreted. The catalysed reaction is a 4-O-methyl-alpha-D-glucuronosyl ester derivative + H2O = 4-O-methyl-alpha-D-glucuronate derivative + an alcohol + H(+). Its function is as follows. Glucuronoyl esterase which may play a significant role in biomass degradation, as it is considered to disconnect hemicellulose from lignin through the hydrolysis of the ester bond between 4-O-methyl-D-glucuronic acid residues of glucuronoxylans and aromatic alcohols of lignin. The chain is 4-O-methyl-glucuronoyl methylesterase from Phanerochaete carnosa (strain HHB-10118-sp) (White-rot fungus).